The following is a 150-amino-acid chain: 15 kDa calcium-binding protein (150 aa).

Ala-1 is modified (N-acetylalanine). 4 EF-hand domains span residues 7-42, 43-78, 81-116, and 118-150; these read TDAE…AGKS, FSEE…KMMK, WKKS…RIEP, and MSKE…IKSS. Ca(2+)-binding residues include Asp-22, Asp-24, Ser-26, Thr-28, Asp-56, Asp-58, Ser-60, Thr-62, Glu-67, Asp-94, Asp-96, Asn-98, Glu-105, Asp-131, Asp-133, Asp-135, Lys-137, and Glu-142.

The protein resides in the nucleus. It localises to the cytoplasm. It is found in the cytoskeleton. Its subcellular location is the spindle. May play an important role in mitosis of sea urchin egg. May function as a Ca(2+)-dependent intracellular modulator of microtubule assembly. The protein is 15 kDa calcium-binding protein of Hemicentrotus pulcherrimus (Sea urchin).